The following is a 567-amino-acid chain: Hydroxylamine reductase 2 (567 aa).

C5, C8, C17, and C23 together coordinate [4Fe-4S] cluster. Hybrid [4Fe-2O-2S] cluster-binding residues include H262, E286, C330, C421, C449, C474, E509, and K511. Cysteine persulfide is present on C421.

The protein belongs to the HCP family. Requires [4Fe-4S] cluster as cofactor. The cofactor is hybrid [4Fe-2O-2S] cluster.

It is found in the cytoplasm. It catalyses the reaction A + NH4(+) + H2O = hydroxylamine + AH2 + H(+). Catalyzes the reduction of hydroxylamine to form NH(3) and H(2)O. This chain is Hydroxylamine reductase 2, found in Clostridium acetobutylicum (strain ATCC 824 / DSM 792 / JCM 1419 / IAM 19013 / LMG 5710 / NBRC 13948 / NRRL B-527 / VKM B-1787 / 2291 / W).